The primary structure comprises 317 residues: Transaldolase (317 aa).

K132 (schiff-base intermediate with substrate) is an active-site residue.

Belongs to the transaldolase family. Type 1 subfamily. As to quaternary structure, homodimer.

It localises to the cytoplasm. It carries out the reaction D-sedoheptulose 7-phosphate + D-glyceraldehyde 3-phosphate = D-erythrose 4-phosphate + beta-D-fructose 6-phosphate. The protein operates within carbohydrate degradation; pentose phosphate pathway; D-glyceraldehyde 3-phosphate and beta-D-fructose 6-phosphate from D-ribose 5-phosphate and D-xylulose 5-phosphate (non-oxidative stage): step 2/3. Its function is as follows. Transaldolase is important for the balance of metabolites in the pentose-phosphate pathway. The sequence is that of Transaldolase from Yersinia pseudotuberculosis serotype O:1b (strain IP 31758).